The sequence spans 349 residues: Phenylalanine--tRNA ligase alpha subunit (349 aa).

E259 serves as a coordination point for Mg(2+).

Belongs to the class-II aminoacyl-tRNA synthetase family. Phe-tRNA synthetase alpha subunit type 1 subfamily. In terms of assembly, tetramer of two alpha and two beta subunits. Mg(2+) is required as a cofactor.

It is found in the cytoplasm. The catalysed reaction is tRNA(Phe) + L-phenylalanine + ATP = L-phenylalanyl-tRNA(Phe) + AMP + diphosphate + H(+). In Lactobacillus gasseri (strain ATCC 33323 / DSM 20243 / BCRC 14619 / CIP 102991 / JCM 1131 / KCTC 3163 / NCIMB 11718 / NCTC 13722 / AM63), this protein is Phenylalanine--tRNA ligase alpha subunit.